A 187-amino-acid polypeptide reads, in one-letter code: MNKKQRDEISKLLSYVLRHAPESMGLTLDRDGWCEVDELVGKANANGHSFDRQALEEVVETNEKKRFTLSEDGQRIRAAQGHSTEQVQVQHIEKEPPAWLYHGTASRFMASIETQGLIAGSRHHVHLTEDPETALSVGKRYGQPVLLAVDAKGMFEAGVQFFQADNGVWLVEAVPIEWLTKVADTVS.

Belongs to the KptA/TPT1 family.

Functionally, removes the 2'-phosphate from RNA via an intermediate in which the phosphate is ADP-ribosylated by NAD followed by a presumed transesterification to release the RNA and generate ADP-ribose 1''-2''-cyclic phosphate (APPR&gt;P). May function as an ADP-ribosylase. In Pseudomonas syringae pv. tomato (strain ATCC BAA-871 / DC3000), this protein is Probable RNA 2'-phosphotransferase.